Here is a 694-residue protein sequence, read N- to C-terminus: MSTLIDNHIEHLSKLSDKKICRILRIKPSKDIDKNDLITKLILDHYYGKPRLGNIIVIKSLQNGGVRNWEFNLEEIDSNNRQLDSTIPWNNDYSLREIQNTLNHRYNNINQDLVDLLSVDDMNNSLNTDFLKKFYTYFYIGNYNRDKLCQTMKTFAKSTKKVTSNGITKNKTVGKGAAGIAFLAETNSGSFEFVIKAMNNVKQYRNKSLDIGTILYKSELPLRSNVKNNHLEYLATDVMRTVELRYPGYSGYNAFISNEGLLYLNSANDNFTNQTIMHIVLNRILTQYDNDHFIYQFDAFFCENRSGLKRGTSTLTNKITLGKTNSTNVKQTDGYNIMEFANAGSLDAILDDWSKSINIDSNYETLLFMFNDIFVQILKTLKILQQPKFAFVHGDLKTKNIFVKTDGQINLPNGQVFPRYIYKIADYDKSSITWNGIRFHNSGNLGTNIIGKLYDNLNTLDLTSTVDSNYYYLTNICPFIESCTSIINGIELESIPIRYLPIPFYSSIDVYSFVTSMLCHKIFHNFVDYCLVRSIDNEITNILKHLFTETDLNIVMDHINNTFNSNKKLDLTKYGKIISIIKNNHIGLRKNINKIYDIYGIKLHMKETRTVVPNIILSADQNICLDKCKLNTCNIIQSTRYNRLSDQCYWKSTNSETQELHISDSDQIDREIDSDEQKQIIDNLFNDIKQQSKK.

One can recognise a Protein kinase domain in the interval 167-548 (ITKNKTVGKG…ITNILKHLFT (382 aa)). ATP-binding positions include 173–181 (VGKGAAGIA) and Lys196. Asp395 acts as the Proton acceptor in catalysis.

This sequence belongs to the protein kinase superfamily. Ser/Thr protein kinase family.

It is found in the virion. It catalyses the reaction L-seryl-[protein] + ATP = O-phospho-L-seryl-[protein] + ADP + H(+). The enzyme catalyses L-threonyl-[protein] + ATP = O-phospho-L-threonyl-[protein] + ADP + H(+). The sequence is that of Putative serine/threonine-protein kinase R679 from Acanthamoeba polyphaga (Amoeba).